Consider the following 345-residue polypeptide: S-adenosylmethionine:tRNA ribosyltransferase-isomerase (345 aa).

It belongs to the QueA family. As to quaternary structure, monomer.

Its subcellular location is the cytoplasm. It catalyses the reaction 7-aminomethyl-7-carbaguanosine(34) in tRNA + S-adenosyl-L-methionine = epoxyqueuosine(34) in tRNA + adenine + L-methionine + 2 H(+). It participates in tRNA modification; tRNA-queuosine biosynthesis. In terms of biological role, transfers and isomerizes the ribose moiety from AdoMet to the 7-aminomethyl group of 7-deazaguanine (preQ1-tRNA) to give epoxyqueuosine (oQ-tRNA). This is S-adenosylmethionine:tRNA ribosyltransferase-isomerase from Shewanella oneidensis (strain ATCC 700550 / JCM 31522 / CIP 106686 / LMG 19005 / NCIMB 14063 / MR-1).